Reading from the N-terminus, the 335-residue chain is Nucleoid-associated protein PP_0973 (335 aa).

It belongs to the YejK family.

Its subcellular location is the cytoplasm. It localises to the nucleoid. The polypeptide is Nucleoid-associated protein PP_0973 (Pseudomonas putida (strain ATCC 47054 / DSM 6125 / CFBP 8728 / NCIMB 11950 / KT2440)).